The primary structure comprises 352 residues: Protein RecA (352 aa).

65 to 72 is a binding site for ATP; it reads GPESSGKT. Residues 332 to 352 form a disordered region; the sequence is EEVEKADVKKDAKKDAAEALK. Positions 333–352 are enriched in basic and acidic residues; it reads EVEKADVKKDAKKDAAEALK.

Belongs to the RecA family.

The protein resides in the cytoplasm. Functionally, can catalyze the hydrolysis of ATP in the presence of single-stranded DNA, the ATP-dependent uptake of single-stranded DNA by duplex DNA, and the ATP-dependent hybridization of homologous single-stranded DNAs. It interacts with LexA causing its activation and leading to its autocatalytic cleavage. The sequence is that of Protein RecA from Photobacterium profundum (strain SS9).